The primary structure comprises 342 residues: Holliday junction branch migration complex subunit RuvB (342 aa).

Residues 1–181 (MENRMVTPFD…FGMLCAMEFY (181 aa)) are large ATPase domain (RuvB-L). ATP contacts are provided by residues L20, R21, G62, K65, T66, T67, 128–130 (EDY), R171, Y181, and R218. T66 provides a ligand contact to Mg(2+). The tract at residues 182-252 (TDEELMEIVV…GAKAALDLLE (71 aa)) is small ATPAse domain (RuvB-S). Positions 255 to 342 (KEGLDKIDNK…KDNQVSIFNK (88 aa)) are head domain (RuvB-H). 2 residues coordinate DNA: R310 and R315.

It belongs to the RuvB family. As to quaternary structure, homohexamer. Forms an RuvA(8)-RuvB(12)-Holliday junction (HJ) complex. HJ DNA is sandwiched between 2 RuvA tetramers; dsDNA enters through RuvA and exits via RuvB. An RuvB hexamer assembles on each DNA strand where it exits the tetramer. Each RuvB hexamer is contacted by two RuvA subunits (via domain III) on 2 adjacent RuvB subunits; this complex drives branch migration. In the full resolvosome a probable DNA-RuvA(4)-RuvB(12)-RuvC(2) complex forms which resolves the HJ.

It localises to the cytoplasm. The enzyme catalyses ATP + H2O = ADP + phosphate + H(+). In terms of biological role, the RuvA-RuvB-RuvC complex processes Holliday junction (HJ) DNA during genetic recombination and DNA repair, while the RuvA-RuvB complex plays an important role in the rescue of blocked DNA replication forks via replication fork reversal (RFR). RuvA specifically binds to HJ cruciform DNA, conferring on it an open structure. The RuvB hexamer acts as an ATP-dependent pump, pulling dsDNA into and through the RuvAB complex. RuvB forms 2 homohexamers on either side of HJ DNA bound by 1 or 2 RuvA tetramers; 4 subunits per hexamer contact DNA at a time. Coordinated motions by a converter formed by DNA-disengaged RuvB subunits stimulates ATP hydrolysis and nucleotide exchange. Immobilization of the converter enables RuvB to convert the ATP-contained energy into a lever motion, pulling 2 nucleotides of DNA out of the RuvA tetramer per ATP hydrolyzed, thus driving DNA branch migration. The RuvB motors rotate together with the DNA substrate, which together with the progressing nucleotide cycle form the mechanistic basis for DNA recombination by continuous HJ branch migration. Branch migration allows RuvC to scan DNA until it finds its consensus sequence, where it cleaves and resolves cruciform DNA. This Clostridium botulinum (strain 657 / Type Ba4) protein is Holliday junction branch migration complex subunit RuvB.